The primary structure comprises 290 residues: Elongation factor Ts (290 aa).

Residues T81–V84 form an involved in Mg(2+) ion dislocation from EF-Tu region.

This sequence belongs to the EF-Ts family.

It is found in the cytoplasm. Associates with the EF-Tu.GDP complex and induces the exchange of GDP to GTP. It remains bound to the aminoacyl-tRNA.EF-Tu.GTP complex up to the GTP hydrolysis stage on the ribosome. This is Elongation factor Ts from Saccharophagus degradans (strain 2-40 / ATCC 43961 / DSM 17024).